A 967-amino-acid chain; its full sequence is Alanine--tRNA ligase, cytoplasmic (967 aa).

Zn(2+) contacts are provided by His605, His609, Cys724, and His728.

It belongs to the class-II aminoacyl-tRNA synthetase family. As to quaternary structure, monomer. The cofactor is Zn(2+). The N-terminus is blocked.

It is found in the cytoplasm. The enzyme catalyses tRNA(Ala) + L-alanine + ATP = L-alanyl-tRNA(Ala) + AMP + diphosphate. Its function is as follows. Catalyzes the attachment of alanine to tRNA(Ala) in a two-step reaction: alanine is first activated by ATP to form Ala-AMP and then transferred to the acceptor end of tRNA(Ala). Also edits incorrectly charged tRNA(Ala) via its editing domain. The chain is Alanine--tRNA ligase, cytoplasmic from Bombyx mori (Silk moth).